The chain runs to 396 residues: MIISAASDYRAAAQRTLPPFLFHYIDGGAYAEYTLRRNVEDLSQVALRQRVLKNMSDLSLETTLFNETLSMPVALAPVGLCGMYARRGEVQAAAAADAKGIPFTLSTVSVCPIEEVAPTIQRPMWFQLYVLRDRGFMRNALERAKAAGCSTLVFTVDMPTPGARYRDAHSGMSGPNAAMRRYWQAVMHPKWAWDVGLNGRPHDLGNISAYLGKPTGLEDYIGWLANNFDPSISWKDLEWIREFWDGPMVIKGILDPEDARDAVRFGADGIVVSNHGGRQLDGVLSSARALPAIADAVKGDIAILADSGIRNGLDVVRMIALGADTVLLGRAYLYALATAGKAGVANLLDLVEKEMKVAMTLTGAKSISEISGDSLVQELGKSLPAALAPMSKGDAA.

Residues methionine 1–glycine 380 form the FMN hydroxy acid dehydrogenase domain. Tyrosine 24 contributes to the substrate binding site. Residues serine 106 and glutamine 127 each contribute to the FMN site. Tyrosine 129 serves as a coordination point for substrate. FMN is bound at residue threonine 155. Residue arginine 164 coordinates substrate. Lysine 251 contributes to the FMN binding site. The active-site Proton acceptor is the histidine 275. Arginine 278 serves as a coordination point for substrate. Residue aspartate 306 to arginine 330 coordinates FMN.

This sequence belongs to the FMN-dependent alpha-hydroxy acid dehydrogenase family. FMN serves as cofactor.

It localises to the cell inner membrane. The catalysed reaction is (S)-lactate + A = pyruvate + AH2. In terms of biological role, catalyzes the conversion of L-lactate to pyruvate. Is coupled to the respiratory chain. In Salmonella paratyphi A (strain ATCC 9150 / SARB42), this protein is L-lactate dehydrogenase.